The primary structure comprises 333 residues: Biotin synthase (333 aa).

Positions 40 to 269 constitute a Radical SAM core domain; sequence YRVQLASLLS…HARVRLSAGR (230 aa). Residues Cys-55, Cys-59, and Cys-62 each coordinate [4Fe-4S] cluster. [2Fe-2S] cluster contacts are provided by Cys-100, Cys-132, Cys-192, and Arg-264.

It belongs to the radical SAM superfamily. Biotin synthase family. Homodimer. The cofactor is [4Fe-4S] cluster. [2Fe-2S] cluster serves as cofactor.

It carries out the reaction (4R,5S)-dethiobiotin + (sulfur carrier)-SH + 2 reduced [2Fe-2S]-[ferredoxin] + 2 S-adenosyl-L-methionine = (sulfur carrier)-H + biotin + 2 5'-deoxyadenosine + 2 L-methionine + 2 oxidized [2Fe-2S]-[ferredoxin]. The protein operates within cofactor biosynthesis; biotin biosynthesis; biotin from 7,8-diaminononanoate: step 2/2. Functionally, catalyzes the conversion of dethiobiotin (DTB) to biotin by the insertion of a sulfur atom into dethiobiotin via a radical-based mechanism. In Synechococcus sp. (strain CC9902), this protein is Biotin synthase.